The following is a 229-amino-acid chain: Ribosome maturation factor RimM (229 aa).

The segment at 1–21 (MAGHDSGNAKRGRSPSFGVFV) is disordered. The PRC barrel domain occupies 148–229 (ADEFYWVDLI…RVVVDWEADY (82 aa)).

The protein belongs to the RimM family. Binds ribosomal protein uS19.

Its subcellular location is the cytoplasm. In terms of biological role, an accessory protein needed during the final step in the assembly of 30S ribosomal subunit, possibly for assembly of the head region. Essential for efficient processing of 16S rRNA. May be needed both before and after RbfA during the maturation of 16S rRNA. It has affinity for free ribosomal 30S subunits but not for 70S ribosomes. This chain is Ribosome maturation factor RimM, found in Burkholderia mallei (strain NCTC 10247).